Reading from the N-terminus, the 785-residue chain is Potassium transporter 5 (785 aa).

Over M1–S60 the chain is Cytoplasmic. S35 is subject to Phosphoserine. A helical transmembrane segment spans residues L61 to Y81. Residues A82–G97 lie on the Extracellular side of the membrane. A helical transmembrane segment spans residues V98–V118. The Cytoplasmic segment spans residues L119–K184. A helical membrane pass occupies residues I185–T205. Over P206–K218 the chain is Extracellular. The helical transmembrane segment at S219 to F239 threads the bilayer. The Cytoplasmic portion of the chain corresponds to Q240–V247. A helical transmembrane segment spans residues G248–F268. Residues N269 to G297 lie on the Extracellular side of the membrane. The chain crosses the membrane as a helical span at residues W298–L318. At G319 to Q327 the chain is on the cytoplasmic side. The helical transmembrane segment at I328–Y348 threads the bilayer. The Extracellular segment spans residues L349–P367. N-linked (GlcNAc...) asparagine glycosylation is present at N355. The chain crosses the membrane as a helical span at residues L368–I388. Residues S389–Q419 are Cytoplasmic-facing. Residues V420 to F440 traverse the membrane as a helical segment. Residues R441 to G451 lie on the Extracellular side of the membrane. Residues I452–I472 traverse the membrane as a helical segment. Over W473–N476 the chain is Cytoplasmic. A helical membrane pass occupies residues I477 to S497. Over V498–K501 the chain is Extracellular. The helical transmembrane segment at F502–I522 threads the bilayer. Topologically, residues W523–L785 are cytoplasmic. Residues G660 to S699 are disordered. Residues E662–N673 show a composition bias toward acidic residues. The span at A674–P686 shows a compositional bias: polar residues. Residues S687–S697 show a composition bias toward low complexity.

It belongs to the HAK/KUP transporter (TC 2.A.72.3) family. In terms of assembly, interacts with ILK1. Phosphorylated at the N-terminus (amino acids 1-95) by CIPK23. Predominantly expressed in the roots.

The protein resides in the cell membrane. Its function is as follows. High-affinity potassium transporter. Can also transport rubidium and cesium. Is essential with AKT1 for high-affinity potassium uptake in roots during seedling establishment and postgermination growth under low potassium conditions. Mediates potassium uptake by plant roots in response to low potassium conditions, by a calcium-, CBL-, and CIPK-dependent pathway. Positively regulated by the calcium sensors calcineurin B-like genes CBL1, CBL8, CBL9 and CBL10, and by phosphorylation by CIPK23. In Arabidopsis thaliana (Mouse-ear cress), this protein is Potassium transporter 5 (POT5).